Here is a 687-residue protein sequence, read N- to C-terminus: Ferric transport system permease protein FbpB (687 aa).

The next 19 helical transmembrane spans lie at 10–30 (LFES…ALPS), 50–70 (GWSS…FWLL), 85–105 (LGLI…YKVS), 106–126 (MGYS…FAFA), 141–161 (LLSI…AIFI), 192–212 (LFLS…FALY), 226–246 (IFSI…VTLM), 271–291 (GFNG…FMIL), 318–338 (YNII…IVFI), 347–367 (PLVL…YIAG), 378–398 (LGSM…MWIG), 425–445 (IIVM…SIFY), 450–472 (VNWG…QGLS), 484–504 (IYAG…AYIV), 517–537 (FLTM…YILA), 538–558 (FNDA…SMVM), 594–614 (IWFI…VTSF), 620–640 (TVSA…AYIL), and 649–669 (GVAI…ILFF). The 206-residue stretch at 188 to 393 (ISNSLFLSGF…IFSLLIFIVQ (206 aa)) folds into the ABC transmembrane type-1 1 domain. The ABC transmembrane type-1 2 domain occupies 479-669 (LINTMIYAGI…VVMMAIILFF (191 aa)).

This sequence belongs to the binding-protein-dependent transport system permease family. FbpB subfamily. In terms of assembly, the complex is composed of two ATP-binding proteins (FbpC), two transmembrane proteins (FbpB) and a solute-binding protein (FbpA).

The protein localises to the cell inner membrane. Functionally, part of the ABC transporter complex FbpABC (TC 3.A.1.10.1) involved in Fe(3+) ions import. Probably responsible for the translocation of the substrate across the membrane. The chain is Ferric transport system permease protein FbpB (fbpB) from Actinobacillus pleuropneumoniae (Haemophilus pleuropneumoniae).